We begin with the raw amino-acid sequence, 125 residues long: Meiotically up-regulated gene 112 protein (125 aa).

Its subcellular location is the golgi apparatus. Its function is as follows. Has a role in meiosis. This Schizosaccharomyces pombe (strain 972 / ATCC 24843) (Fission yeast) protein is Meiotically up-regulated gene 112 protein (mug112).